A 173-amino-acid polypeptide reads, in one-letter code: Photosystem I assembly protein Ycf3 (173 aa).

TPR repeat units follow at residues 35-68 (AFAYYRDGMSAQADGEYAEALENYQEALTLEEDP), 72-105 (SFILYNIALVHTSNGDHQTALDHYLQALDLNPKM), and 120-153 (GQRSEEAGNDDEAERHYDQAAEYWTQAIRLAPNN).

This sequence belongs to the Ycf3 family.

Its subcellular location is the cellular thylakoid membrane. Essential for the assembly of the photosystem I (PSI) complex. May act as a chaperone-like factor to guide the assembly of the PSI subunits. In Synechococcus elongatus (strain ATCC 33912 / PCC 7942 / FACHB-805) (Anacystis nidulans R2), this protein is Photosystem I assembly protein Ycf3.